Consider the following 297-residue polypeptide: Translational activator of cytochrome c oxidase 1 (297 aa).

Residues 20–45 are disordered; that stretch reads RGPGVRAAPPRDPRPSHPEPRGCGAA. Residues 28 to 39 show a composition bias toward basic and acidic residues; sequence PPRDPRPSHPEP. Residues 191–227 adopt a coiled-coil conformation; that stretch reads VEVEDREKKAVNLERALEMAIEAGAEDVKETEDEEER.

Belongs to the TACO1 family.

The protein localises to the mitochondrion. Its function is as follows. Acts as a translational activator of mitochondrially-encoded cytochrome c oxidase 1. This chain is Translational activator of cytochrome c oxidase 1 (TACO1), found in Homo sapiens (Human).